The following is a 257-amino-acid chain: Small ribosomal subunit protein uS2 (257 aa).

This sequence belongs to the universal ribosomal protein uS2 family.

The protein is Small ribosomal subunit protein uS2 of Bartonella quintana (strain Toulouse) (Rochalimaea quintana).